Consider the following 147-residue polypeptide: Chorion class B protein B.L1 (147 aa).

Residues 1–38 (IGCGRGCGGRGYGGLGYGGLGYGGLGYGGLGGGCGRGF) form a left arm region. 4 tandem repeats follow at residues 11 to 15 (GYGGL), 16 to 20 (GYGGL), 21 to 25 (GYGGL), and 26 to 30 (GYGGL). Residues 11–30 (GYGGLGYGGLGYGGLGYGGL) form a 4 X 5 AA tandem repeats of G-Y-G-G-L region. Residues 39–107 (SGGGLPVATA…GNGAVGITRE (69 aa)) form a central domain region. The tract at residues 108-147 (GGLGYGAGYGGGYGLGYGGYGGGYGLGYGGYGGCGCGCGY) is right arm (Gly-rich tandem repeats).

This sequence belongs to the chorion protein family.

Functionally, this protein is one of many from the eggshell of the silk moth. The sequence is that of Chorion class B protein B.L1 from Bombyx mori (Silk moth).